The primary structure comprises 436 residues: UPF0597 protein YhaM (436 aa).

The protein belongs to the UPF0597 family.

This Salmonella dublin (strain CT_02021853) protein is UPF0597 protein YhaM.